The primary structure comprises 252 residues: Chitooligosaccharide deacetylase (252 aa).

2 residues coordinate Mg(2+): His61 and His125.

This sequence belongs to the YdjC deacetylase family. ChbG subfamily. As to quaternary structure, homodimer. Mg(2+) serves as cofactor.

The protein resides in the cytoplasm. The catalysed reaction is N,N'-diacetylchitobiose + H2O = N-acetyl-beta-D-glucosaminyl-(1-&gt;4)-D-glucosamine + acetate. It catalyses the reaction diacetylchitobiose-6'-phosphate + H2O = N'-monoacetylchitobiose-6'-phosphate + acetate. The protein operates within glycan degradation; chitin degradation. In terms of biological role, involved in the degradation of chitin. ChbG is essential for growth on the acetylated chitooligosaccharides chitobiose and chitotriose but is dispensable for growth on cellobiose and chitosan dimer, the deacetylated form of chitobiose. Deacetylation of chitobiose-6-P and chitotriose-6-P is necessary for both the activation of the chb promoter by the regulatory protein ChbR and the hydrolysis of phosphorylated beta-glucosides by the phospho-beta-glucosidase ChbF. Catalyzes the removal of only one acetyl group from chitobiose-6-P to yield monoacetylchitobiose-6-P, the inducer of ChbR and the substrate of ChbF. The polypeptide is Chitooligosaccharide deacetylase (Escherichia coli O139:H28 (strain E24377A / ETEC)).